The following is a 335-amino-acid chain: UDP-N-acetylglucosamine--N-acetylmuramyl-(pentapeptide) pyrophosphoryl-undecaprenol N-acetylglucosamine transferase (335 aa).

UDP-N-acetyl-alpha-D-glucosamine is bound by residues 9 to 11 (TGG), N123, S176, and Q274.

Belongs to the glycosyltransferase 28 family. MurG subfamily.

The protein localises to the cell inner membrane. The enzyme catalyses di-trans,octa-cis-undecaprenyl diphospho-N-acetyl-alpha-D-muramoyl-L-alanyl-D-glutamyl-meso-2,6-diaminopimeloyl-D-alanyl-D-alanine + UDP-N-acetyl-alpha-D-glucosamine = di-trans,octa-cis-undecaprenyl diphospho-[N-acetyl-alpha-D-glucosaminyl-(1-&gt;4)]-N-acetyl-alpha-D-muramoyl-L-alanyl-D-glutamyl-meso-2,6-diaminopimeloyl-D-alanyl-D-alanine + UDP + H(+). It participates in cell wall biogenesis; peptidoglycan biosynthesis. Functionally, cell wall formation. Catalyzes the transfer of a GlcNAc subunit on undecaprenyl-pyrophosphoryl-MurNAc-pentapeptide (lipid intermediate I) to form undecaprenyl-pyrophosphoryl-MurNAc-(pentapeptide)GlcNAc (lipid intermediate II). The chain is UDP-N-acetylglucosamine--N-acetylmuramyl-(pentapeptide) pyrophosphoryl-undecaprenol N-acetylglucosamine transferase from Campylobacter fetus subsp. fetus (strain 82-40).